We begin with the raw amino-acid sequence, 405 residues long: Mucosal addressin cell adhesion molecule 1 (405 aa).

The first 21 residues, 1–21 (MESILALLLALALVPYQLSRG), serve as a signal peptide directing secretion. 2 Ig-like domains span residues 22 to 109 (QSFQ…ILVY) and 110 to 227 (AFPD…TSPK). Residues 22–364 (QSFQVNPPES…PGQVTPNSSS (343 aa)) lie on the Extracellular side of the membrane. Disulfide bonds link cysteine 45–cysteine 91, cysteine 49–cysteine 95, and cysteine 132–cysteine 200. Residues 221-257 (QSQTSPKPPNTTSAEPYILTSSSTAEAVSTGLNITTL) are mucin-like. N-linked (GlcNAc...) asparagine glycosylation is found at asparagine 230 and asparagine 253. Positions 255–275 (TTLPSAPPYPKLSPRTLSSEG) are disordered. Residues 258-357 (PSAPPYPKLS…EVTNLYVPGQ (100 aa)) enclose the Ig-like 3 domain. Cysteine 293 and cysteine 341 are oxidised to a cystine. A glycan (N-linked (GlcNAc...) asparagine) is linked at asparagine 361. Residues 365–385 (TVVLWIGSLVLGLLALVFLAY) form a helical membrane-spanning segment. Residues 386 to 405 (RLWKCYRPGPRPDTSSCTHL) lie on the Cytoplasmic side of the membrane.

As to quaternary structure, homodimer. O-glycosylated; contains syalic acid. The Ser/Thr-rich mucin-like domain may provide possible sites for O-glycosylation. Highly expressed on high endothelial venules (HEV) of organized intestinal lymphoid tissues like the Peyer patches and mesenteric lymph nodes, and in the lamina propria of the intestine. Some expression found in the spleen, and low levels of expression in the peripheral lymph nodes and the lactating mammary gland. No expression was detected in the liver, kidneys, lungs or in normal brain. Expressed as well in brain endothelioma cells, and mucosal tissues which are in a chronic state of inflammation, such as inflamed pancreas.

It is found in the membrane. Its function is as follows. Cell adhesion leukocyte receptor expressed by mucosal venules, helps to direct lymphocyte traffic into mucosal tissues including the Peyer patches and the intestinal lamina propria. It can bind both the integrin alpha-4/beta-7 and L-selectin, regulating both the passage and retention of leukocytes. Both isoform 1 and isoform 2 can adhere to integrin alpha-4/beta-7. Isoform 2, lacking the mucin-like domain, may be specialized in supporting integrin alpha-4/beta-7-dependent adhesion strengthening, independent of L-selectin binding. This Mus musculus (Mouse) protein is Mucosal addressin cell adhesion molecule 1 (Madcam1).